Consider the following 108-residue polypeptide: Putative disulfide oxidoreductase YuzD (108 aa).

A disulfide bridge connects residues Cys16 and Cys19.

The polypeptide is Putative disulfide oxidoreductase YuzD (yuzD) (Bacillus subtilis (strain 168)).